A 453-amino-acid chain; its full sequence is tRNA modification GTPase MnmE (453 aa).

Arginine 22, glutamate 79, and lysine 119 together coordinate (6S)-5-formyl-5,6,7,8-tetrahydrofolate. In terms of domain architecture, TrmE-type G spans 215–376 (GMKVVIAGRP…LKQHLKSLMG (162 aa)). Asparagine 225 is a K(+) binding site. GTP-binding positions include 225–230 (NAGKSS), 244–250 (TEIAGTT), 269–272 (DTAG), and 334–337 (NKAD). Serine 229 provides a ligand contact to Mg(2+). Positions 244, 246, and 249 each coordinate K(+). Threonine 250 provides a ligand contact to Mg(2+). (6S)-5-formyl-5,6,7,8-tetrahydrofolate is bound at residue lysine 453.

Belongs to the TRAFAC class TrmE-Era-EngA-EngB-Septin-like GTPase superfamily. TrmE GTPase family. As to quaternary structure, homodimer. Heterotetramer of two MnmE and two MnmG subunits. K(+) serves as cofactor.

The protein localises to the cytoplasm. In terms of biological role, exhibits a very high intrinsic GTPase hydrolysis rate. Involved in the addition of a carboxymethylaminomethyl (cmnm) group at the wobble position (U34) of certain tRNAs, forming tRNA-cmnm(5)s(2)U34. This is tRNA modification GTPase MnmE from Shewanella baltica (strain OS155 / ATCC BAA-1091).